The chain runs to 186 residues: MSEGVELKELKRRMDGAIAAFKHDIASLRTGRASANVLDPVTVEAYGSRMPLNQVANIMVPEPRMLSVSVWDKTMVGAVDRAIRESNLGLNPIIDGQNLRIPLPELNEERRKSLVKVAHDYAEKSKVAVRHVRRDGMDGLKKAEKDGDIGQDESRAQSERVQKMTDEVISEIDRLLAEKEKEIMQV.

Residues 135–162 are disordered; it reads DGMDGLKKAEKDGDIGQDESRAQSERVQ.

This sequence belongs to the RRF family.

Its subcellular location is the cytoplasm. In terms of biological role, responsible for the release of ribosomes from messenger RNA at the termination of protein biosynthesis. May increase the efficiency of translation by recycling ribosomes from one round of translation to another. The chain is Ribosome-recycling factor from Sinorhizobium fredii (strain NBRC 101917 / NGR234).